The following is a 1217-amino-acid chain: Splicing factor 3B subunit 3 (1217 aa).

The protein belongs to the RSE1 family. In terms of assembly, component of the 17S U2 SnRNP complex, a ribonucleoprotein complex that contains small nuclear RNA (snRNA) U2 and a number of specific proteins. Part of the SF3B subcomplex of the 17S U2 SnRNP complex. SF3B associates with the splicing subcomplex SF3A and a 12S RNA unit to form the U2 small nuclear ribonucleoproteins complex (U2 snRNP). Component of the minor (U12-type spliceosome) spliceosome.

It localises to the nucleus. Component of the 17S U2 SnRNP complex of the spliceosome, a large ribonucleoprotein complex that removes introns from transcribed pre-mRNAs. The 17S U2 SnRNP complex (1) directly participates in early spliceosome assembly and (2) mediates recognition of the intron branch site during pre-mRNA splicing by promoting the selection of the pre-mRNA branch-site adenosine, the nucleophile for the first step of splicing. Within the 17S U2 SnRNP complex, SF3B3 is part of the SF3B subcomplex, which is required for 'A' complex assembly formed by the stable binding of U2 snRNP to the branchpoint sequence in pre-mRNA. Also acts as a component of the minor spliceosome, which is involved in the splicing of U12-type introns in pre-mRNAs. The polypeptide is Splicing factor 3B subunit 3 (sf3b3) (Danio rerio (Zebrafish)).